The chain runs to 170 residues: MALPGENTKFYETPNHPYQGERIAEESDLLSRYGLKNKEELWRAQSELRDYRREARRLLGQTGTVSGEEFVARLQRIGILSEEERLDDVLSLEVTDVLERRLQTVVYREGLANTMGQARQFVSHGHVTVDGSRVTEPSYTVPVSEENTLAFDETSDLTDELHPARAGAQE.

The S4 RNA-binding domain maps to 100 to 164 (RRLQTVVYRE…SDLTDELHPA (65 aa)).

This sequence belongs to the universal ribosomal protein uS4 family. In terms of assembly, part of the 30S ribosomal subunit. Contacts protein S5. The interaction surface between S4 and S5 is involved in control of translational fidelity.

One of the primary rRNA binding proteins, it binds directly to 16S rRNA where it nucleates assembly of the body of the 30S subunit. Functionally, with S5 and S12 plays an important role in translational accuracy. This Halobacterium salinarum (strain ATCC 29341 / DSM 671 / R1) protein is Small ribosomal subunit protein uS4.